A 673-amino-acid chain; its full sequence is Cyclic nucleotide-binding domain-containing protein 2 (673 aa).

A compositionally biased stretch (polar residues) spans 1-15 (MNRSANPEAASSTSH). A disordered region spans residues 1 to 89 (MNRSANPEAA…PQPKDRPGVQ (89 aa)). The span at 43 to 86 (PADKSDTTESKSESGSDSRSEEDKESPASIKEIKAETPQPKDRP) shows a compositional bias: basic and acidic residues. 206-329 (CYRSYTESLQ…ETQYRYNFFR (124 aa)) contacts a nucleoside 3',5'-cyclic phosphate.

In terms of tissue distribution, testis-specific. Exclusively expressed in testicular germ cells while it is not present in mature sperm (at protein level).

Its subcellular location is the cytoplasm. It localises to the cytosol. Its function is as follows. Essential for male fertility. Plays an important role in spermatogenesis and regulates sperm motility by controlling the development of the flagellar bending of sperm. The chain is Cyclic nucleotide-binding domain-containing protein 2 (Cnbd2) from Mus musculus (Mouse).